The sequence spans 399 residues: Forkhead box protein A4 (399 aa).

Residues 119-213 constitute a DNA-binding region (fork-head); the sequence is KPPYSYISLI…ENGCYLRRQK (95 aa). Positions 219–234 are enriched in basic and acidic residues; it reads RSKSGEREKKVNKPGD. A disordered region spans residues 219 to 290; sequence RSKSGEREKK…VGLSPTSEQA (72 aa). Residues 267 to 277 show a composition bias toward polar residues; it reads STGSSIHQASG.

It localises to the nucleus. In terms of biological role, transcriptional repressor involved in embryonic nervous system development. Plays a role in the induction and patterning of the anterior-posterior neural axis. Involved in the establishment of floor plate differentiation from neural plate cells during gastrulation. Binds the anf1 promoter sequence to restrict expression of anf1 to the anterior of the neural plate, thereby patterning the forebrain. Can bind to the HNF-3-alpha DNA target sequence. Cooperates with t/bra in a dose-dependent manner to specify dorsal mesoderm formation, including notochord. May be involved in the dorso-ventral patterning of the mesoderm. Binds to DNA via the target sequence 5'-[GA]TAAA[TC]A-3', with 5'-GTAAATA-3' being the preferred binding site. The protein is Forkhead box protein A4 of Xenopus tropicalis (Western clawed frog).